The sequence spans 82 residues: Cytochrome c-551 (82 aa).

Positions 12, 15, 16, and 61 each coordinate heme c.

In terms of processing, binds 1 heme c group covalently per subunit.

This chain is Cytochrome c-551, found in Azotobacter vinelandii.